Consider the following 343-residue polypeptide: Hydroxycarboxylic acid receptor 1 (343 aa).

The Extracellular portion of the chain corresponds to Met1–Leu21. N-linked (GlcNAc...) asparagine glycosylation occurs at Asn3. The helical transmembrane segment at Leu22–Phe42 threads the bilayer. Residues His43–Ser49 are Cytoplasmic-facing. Residues Ser50–Leu70 form a helical membrane-spanning segment. At Arg71 to Leu90 the chain is on the extracellular side. Cys88 and Cys165 are disulfide-bonded. Residues Val91–Val111 traverse the membrane as a helical segment. The Cytoplasmic segment spans residues Asp112–Thr131. A helical membrane pass occupies residues Ala132–Met152. At Glu153 to Gln182 the chain is on the extracellular side. A helical membrane pass occupies residues Leu183–Leu203. Topologically, residues Arg204–Arg220 are cytoplasmic. Residues Phe221–Leu241 form a helical membrane-spanning segment. Residues Tyr242–Ala259 are Extracellular-facing. Residues Leu260–Phe280 form a helical membrane-spanning segment. The Cytoplasmic portion of the chain corresponds to Ser281–Cys343. Polar residues predominate over residues Cys319–Ser334. The tract at residues Cys319 to Cys343 is disordered.

Belongs to the G-protein coupled receptor 1 family. As to expression, highly expressed in subcutaneous fat and omental fat and detectable in lower levels in brain and many other tissues. High levels detected in epididymal and subcutaneous fat with slightly lower in omental fat, low levels are detected in the brain, skeletal muscle, kidney, liver and the pancreas (at protein level).

It localises to the cell membrane. In terms of biological role, acts as a receptor for L-lactate and mediates its anti-lipolytic effect through a G(i)-protein-mediated pathway. The chain is Hydroxycarboxylic acid receptor 1 (Hcar1) from Mus musculus (Mouse).